We begin with the raw amino-acid sequence, 531 residues long: Polyamine aminopropyltransferase 1 (531 aa).

Helical transmembrane passes span 27–47 (FLLL…ELAL), 59–79 (VLQT…GSLA), 96–116 (GVLA…FAWL), 122–142 (AMIV…PLLM), 160–180 (MFAV…LFLL), 188–208 (GALV…VFIF), and 218–238 (AGLL…YVLA). A spermidine synthase region spans residues 205 to 476 (VFIFRRQTGR…VLARPGTEAP (272 aa)). The PABS domain maps to 233 to 471 (TTYVLADDLE…GNWGFVLARP (239 aa)). Residue glutamine 263 participates in S-methyl-5'-thioadenosine binding. Positions 298 and 320 each coordinate spermidine. S-methyl-5'-thioadenosine is bound by residues glutamate 340 and 374 to 375 (DA). The Proton acceptor role is filled by aspartate 392.

This sequence belongs to the spermidine/spermine synthase family. Homodimer or homotetramer.

Its subcellular location is the cell membrane. It carries out the reaction S-adenosyl 3-(methylsulfanyl)propylamine + putrescine = S-methyl-5'-thioadenosine + spermidine + H(+). It participates in amine and polyamine biosynthesis; spermidine biosynthesis; spermidine from putrescine: step 1/1. Functionally, catalyzes the irreversible transfer of a propylamine group from the amino donor S-adenosylmethioninamine (decarboxy-AdoMet) to putrescine (1,4-diaminobutane) to yield spermidine. This chain is Polyamine aminopropyltransferase 1, found in Streptomyces coelicolor (strain ATCC BAA-471 / A3(2) / M145).